The sequence spans 494 residues: Putative glucuronosyltransferase PGSIP7 (494 aa).

A helical membrane pass occupies residues Gln-4 to Tyr-24. Residues Asp-161 and Asp-163 each contribute to the Mn(2+) site. 5 consecutive transmembrane segments (helical) span residues Tyr-316 to Val-336, Ala-362 to Ile-382, Leu-389 to Ala-409, Phe-410 to Val-430, and Leu-444 to Ile-464.

It belongs to the glycosyltransferase 8 family. Glycogenin subfamily. The cofactor is Mn(2+).

The protein resides in the membrane. The sequence is that of Putative glucuronosyltransferase PGSIP7 (PGSIP7) from Arabidopsis thaliana (Mouse-ear cress).